The sequence spans 338 residues: Heat-inducible transcription repressor HrcA (338 aa).

Belongs to the HrcA family.

Its function is as follows. Negative regulator of class I heat shock genes (grpE-dnaK-dnaJ and groELS operons). Prevents heat-shock induction of these operons. This chain is Heat-inducible transcription repressor HrcA, found in Bacillus cereus (strain AH820).